The following is a 164-amino-acid chain: MRVRFCTKGNLILVIIEDVEESIEWKTLQKKKQQKIKEKLRIRTKAAVKIQAWWRGTLVRRTLLHAALRAWIIQCWWRMTLSRVLEKKRQAALIAYATRERAVIKLQSLVRMWRVRWRYCQVLNAIYIIQGHWQCHNCQTCALLQGHCVVTATHLQFHIEIINS.

2 IQ domains span residues arginine 43 to isoleucine 72 and arginine 99 to isoleucine 128.

This is IQ domain-containing protein F2 (IQCF2) from Homo sapiens (Human).